Reading from the N-terminus, the 365-residue chain is DNA replication and repair protein RecF (365 aa).

Residue 30–37 coordinates ATP; sequence GLNAQGKT.

Belongs to the RecF family.

The protein localises to the cytoplasm. In terms of biological role, the RecF protein is involved in DNA metabolism; it is required for DNA replication and normal SOS inducibility. RecF binds preferentially to single-stranded, linear DNA. It also seems to bind ATP. The polypeptide is DNA replication and repair protein RecF (Chlamydia trachomatis serovar L2b (strain UCH-1/proctitis)).